Reading from the N-terminus, the 141-residue chain is Hemoglobin subunit alpha (141 aa).

The 141-residue stretch at 1–141 folds into the Globin domain; that stretch reads VLSPADKSNV…VSTVLVSKYR (141 aa). Residue Ser-3 is modified to Phosphoserine. N6-succinyllysine occurs at positions 7 and 11. Residue Lys-16 is modified to N6-acetyllysine; alternate. At Lys-16 the chain carries N6-succinyllysine; alternate. Residue Tyr-24 is modified to Phosphotyrosine. Ser-35 is modified (phosphoserine). N6-succinyllysine is present on Lys-40. A Phosphoserine modification is found at Ser-49. Residue His-58 coordinates O2. A heme b-binding site is contributed by His-87. The residue at position 102 (Ser-102) is a Phosphoserine. The residue at position 108 (Thr-108) is a Phosphothreonine. Ser-124 carries the post-translational modification Phosphoserine. Thr-134 is subject to Phosphothreonine. Ser-138 is modified (phosphoserine).

This sequence belongs to the globin family. As to quaternary structure, heterotetramer of two alpha chains and two beta chains. Red blood cells.

In terms of biological role, involved in oxygen transport from the lung to the various peripheral tissues. Its function is as follows. Hemopressin acts as an antagonist peptide of the cannabinoid receptor CNR1. Hemopressin-binding efficiently blocks cannabinoid receptor CNR1 and subsequent signaling. This Chalinolobus morio (Chocolate-wattled bat) protein is Hemoglobin subunit alpha (HBA).